Consider the following 313-residue polypeptide: tRNA dimethylallyltransferase (313 aa).

Position 11-18 (G11–T18) interacts with ATP. T13–T18 serves as a coordination point for substrate. Interaction with substrate tRNA stretches follow at residues D36–L39, Q160–R164, and R243–R248.

The protein belongs to the IPP transferase family. Monomer. The cofactor is Mg(2+).

It catalyses the reaction adenosine(37) in tRNA + dimethylallyl diphosphate = N(6)-dimethylallyladenosine(37) in tRNA + diphosphate. Its function is as follows. Catalyzes the transfer of a dimethylallyl group onto the adenine at position 37 in tRNAs that read codons beginning with uridine, leading to the formation of N6-(dimethylallyl)adenosine (i(6)A). This chain is tRNA dimethylallyltransferase, found in Neisseria meningitidis serogroup C (strain 053442).